The primary structure comprises 1000 residues: Integrin alpha-PS5 (1000 aa).

FG-GAP repeat units lie at residues 15–74, 75–137, 145–198, 199–261, 262–323, 324–379, and 386–448; these read KHLK…GSCS, HYVL…DTPP, SLIP…AAQG, SYAV…GEIV, RKLH…FKFE, KKII…GLRD, and DAPS…SESR. Residue asparagine 58 is glycosylated (N-linked (GlcNAc...) asparagine). Asparagine 231 carries an N-linked (GlcNAc...) asparagine glycan. N-linked (GlcNAc...) asparagine glycosylation is found at asparagine 516, asparagine 592, asparagine 622, asparagine 732, asparagine 771, asparagine 829, asparagine 842, asparagine 853, and asparagine 922. Residues 930–950 form a helical membrane-spanning segment; sequence IWYIILSLIAGHLLLGAMTYI. Over 951–1000 the chain is Cytoplasmic; that stretch reads LYKLRFFKRGKKEELKRLLEEHRSETKEPATDCEGNQEEINVEMHSDLEN. The span at 971–980 shows a compositional bias: basic and acidic residues; the sequence is EHRSETKEPA. The tract at residues 971–1000 is disordered; that stretch reads EHRSETKEPATDCEGNQEEINVEMHSDLEN.

The protein belongs to the integrin alpha chain family. In terms of assembly, heterodimer of an alpha and a beta subunit. Alpha-PS5 associates with beta-PS. Expressed in all follicle cells overlying the oocyte during mid-oogenesis, the strongest expression is observed in the cells covering the anterior end of the oocyte and in the cells forming the dorsal appendages. After completion of oocyte enlargement, expression in main body follicle cells is down-regulated but persists strongly in the dorsal appendage forming cells. Expressed in lamellocytes.

Its subcellular location is the membrane. In terms of biological role, possible role in cell-cell interactions. Minor involvement in the establishment of the oocyte anterior-posterior length. The sequence is that of Integrin alpha-PS5 from Drosophila melanogaster (Fruit fly).